We begin with the raw amino-acid sequence, 431 residues long: Anaerobic glycerol-3-phosphate dehydrogenase subunit B (431 aa).

This sequence belongs to the anaerobic G-3-P dehydrogenase subunit B family. Composed of a catalytic GlpA/B dimer and of membrane bound GlpC. The cofactor is FMN.

It catalyses the reaction a quinone + sn-glycerol 3-phosphate = dihydroxyacetone phosphate + a quinol. The protein operates within polyol metabolism; glycerol degradation via glycerol kinase pathway; glycerone phosphate from sn-glycerol 3-phosphate (anaerobic route): step 1/1. Its function is as follows. Conversion of glycerol 3-phosphate to dihydroxyacetone. Uses fumarate or nitrate as electron acceptor. The protein is Anaerobic glycerol-3-phosphate dehydrogenase subunit B of Mannheimia succiniciproducens (strain KCTC 0769BP / MBEL55E).